A 431-amino-acid chain; its full sequence is Enolase (431 aa).

Q167 serves as a coordination point for (2R)-2-phosphoglycerate. E209 acts as the Proton donor in catalysis. Mg(2+) contacts are provided by D246, E287, and D314. Residues K339, R368, S369, and K390 each contribute to the (2R)-2-phosphoglycerate site. K339 acts as the Proton acceptor in catalysis.

Belongs to the enolase family. The cofactor is Mg(2+).

The protein localises to the cytoplasm. Its subcellular location is the secreted. It localises to the cell surface. It carries out the reaction (2R)-2-phosphoglycerate = phosphoenolpyruvate + H2O. Its pathway is carbohydrate degradation; glycolysis; pyruvate from D-glyceraldehyde 3-phosphate: step 4/5. Its function is as follows. Catalyzes the reversible conversion of 2-phosphoglycerate (2-PG) into phosphoenolpyruvate (PEP). It is essential for the degradation of carbohydrates via glycolysis. The polypeptide is Enolase (Prochlorococcus marinus (strain MIT 9303)).